The primary structure comprises 89 residues: MVMDVDQKKSIIDVHAKHEGDTGSPEVQVALLTARIEQLTGHFKTHKKDFHSRTGLLKMVGQRRKLLKYLKAKDVQRYRALIEKLGLRK.

It belongs to the universal ribosomal protein uS15 family. In terms of assembly, part of the 30S ribosomal subunit. Forms a bridge to the 50S subunit in the 70S ribosome, contacting the 23S rRNA.

One of the primary rRNA binding proteins, it binds directly to 16S rRNA where it helps nucleate assembly of the platform of the 30S subunit by binding and bridging several RNA helices of the 16S rRNA. Its function is as follows. Forms an intersubunit bridge (bridge B4) with the 23S rRNA of the 50S subunit in the ribosome. The protein is Small ribosomal subunit protein uS15 of Nitratidesulfovibrio vulgaris (strain DSM 19637 / Miyazaki F) (Desulfovibrio vulgaris).